A 689-amino-acid polypeptide reads, in one-letter code: Quinidine resistance protein 3 (689 aa).

The segment covering 1 to 24 has biased composition (polar residues); the sequence is MQAQGSQSNVGSLRSNCSDNSLPN. A disordered region spans residues 1 to 73; that stretch reads MQAQGSQSNV…DNQLSRLKSE (73 aa). Residues 1-108 are Extracellular-facing; that stretch reads MQAQGSQSNV…RDYPPMMKKM (108 aa). 2 stretches are compositionally biased toward basic and acidic residues: residues 29-51 and 59-73; these read MHCD…EKTN and SREH…LKSE. The helical transmembrane segment at 109-131 threads the bilayer; the sequence is IVFLIAFSSMMGPMGTSIIFPAI. Over 132-139 the chain is Cytoplasmic; it reads NSITTEFK. A helical membrane pass occupies residues 140–163; sequence TSVIMVNVSIGVYLLSLGVFPLWW. At 164-175 the chain is on the extracellular side; sequence SSLSELEGRRTT. Residues 176–193 form a helical membrane-spanning segment; it reads YITSFALLFAFNIGSALA. Residues 194-235 are Cytoplasmic-facing; it reads PDINSFIALRMLCGAASASVQSVGAGTVADLYISEDRGKNLS. Residues 236-256 form a helical membrane-spanning segment; the sequence is YYYLGPLLAPLLSPIFGSLLV. Topologically, residues 257–265 are extracellular; it reads NRWPWRSTQ. Residues 266 to 283 traverse the membrane as a helical segment; it reads WFMVILSGCNVILLTVLL. Over 284-475 the chain is Cytoplasmic; sequence PETLRKQDSK…KSLHFLEYPP (192 aa). Serine 436 carries the phosphoserine modification. Residues 476–493 form a helical membrane-spanning segment; the sequence is VALAITFSAISFSTVYFV. At 494 to 510 the chain is on the extracellular side; it reads NMTVEYKYSRPPYNFKP. Residues 511 to 532 traverse the membrane as a helical segment; the sequence is LYIGLLYIPNSVTYFFASIYGG. At 533 to 558 the chain is on the cytoplasmic side; that stretch reads RWVDMLLKRYKEKYGILAPEARISWN. A helical membrane pass occupies residues 559–577; sequence VVTSVISFPIALLIFGWCL. Residues 578–586 are Extracellular-facing; it reads DKKCHWVTP. The chain crosses the membrane as a helical span at residues 587–609; the sequence is LIGTALFGYAAMMTIGATLSYLV. Over 610-624 the chain is Cytoplasmic; the sequence is DSLPGKGATGVALNN. Residues 625 to 642 form a helical membrane-spanning segment; sequence LIRQILAATAVFVTTPML. At 643–648 the chain is on the extracellular side; that stretch reads NGMGTG. The chain crosses the membrane as a helical span at residues 649-668; that stretch reads WAFTMLAFIVLGASSVLIIL. Residues 669-689 lie on the Cytoplasmic side of the membrane; that stretch reads KKHGDYWRENYDLQKLYDKID.

Belongs to the major facilitator superfamily. CAR1 family.

It is found in the cell membrane. Multidrug resistance transporter involved in resistance and adaptation to quinidine and to the herbicide barban (4-chloro-2-butynyl [3-chlorophenyl] carbamate). This is Quinidine resistance protein 3 (QDR3) from Saccharomyces cerevisiae (strain ATCC 204508 / S288c) (Baker's yeast).